A 101-amino-acid polypeptide reads, in one-letter code: MKIIGSAFLGIVFCILLAFAIIFGIEIDYYHQGDYLKYLNFLDKLHQYNKIDNSFEYSNHYESALIGVIVLTIICFLIFITPIIIIVITKIKEKKVINKKI.

The next 2 helical transmembrane spans lie at 3–23 (IIGSAFLGIVFCILLAFAIIF) and 68–88 (VIVLTIICFLIFITPIIIIVI).

The protein resides in the cell membrane. This is an uncharacterized protein from Ureaplasma parvum serovar 3 (strain ATCC 700970).